The following is a 227-amino-acid chain: Putative ankyrin repeat protein RF_0314 (227 aa).

ANK repeat units follow at residues 94 to 126 (NGCTFLHYSVEDVKVLYDNIPQFLLEKGADPNI), 130 to 164 (DGNTPLHILINRDFFSSKEIYVAKLLIQYGADIEL), and 168 to 199 (LGWTPIQCFIQAGNIKLKALLQLVKACKDNDF).

The polypeptide is Putative ankyrin repeat protein RF_0314 (Rickettsia felis (strain ATCC VR-1525 / URRWXCal2) (Rickettsia azadi)).